The following is a 64-amino-acid chain: Large ribosomal subunit protein bL32 (64 aa).

Positions 1–35 are disordered; that stretch reads MAVQKSRVTPSRRGQRRSHDALTAKQLSTDPTSGE.

It belongs to the bacterial ribosomal protein bL32 family.

This Xanthomonas campestris pv. campestris (strain 8004) protein is Large ribosomal subunit protein bL32.